We begin with the raw amino-acid sequence, 360 residues long: Phospho-N-acetylmuramoyl-pentapeptide-transferase (360 aa).

Helical transmembrane passes span 26-46, 73-93, 94-114, 132-152, 168-188, 199-219, 239-259, 263-283, 288-308, and 338-358; these read AVLS…KMIL, TMGG…WGDL, SNPY…IGFV, WKYF…YMIG, IMPQ…VGTS, GLAI…AWAT, LVIF…FNTY, VFMG…IAVL, FLLV…ILQV, and VIIR…VTLK.

It belongs to the glycosyltransferase 4 family. MraY subfamily. Mg(2+) is required as a cofactor.

The protein localises to the cell inner membrane. It catalyses the reaction UDP-N-acetyl-alpha-D-muramoyl-L-alanyl-gamma-D-glutamyl-meso-2,6-diaminopimeloyl-D-alanyl-D-alanine + di-trans,octa-cis-undecaprenyl phosphate = di-trans,octa-cis-undecaprenyl diphospho-N-acetyl-alpha-D-muramoyl-L-alanyl-D-glutamyl-meso-2,6-diaminopimeloyl-D-alanyl-D-alanine + UMP. The protein operates within cell wall biogenesis; peptidoglycan biosynthesis. Its function is as follows. Catalyzes the initial step of the lipid cycle reactions in the biosynthesis of the cell wall peptidoglycan: transfers peptidoglycan precursor phospho-MurNAc-pentapeptide from UDP-MurNAc-pentapeptide onto the lipid carrier undecaprenyl phosphate, yielding undecaprenyl-pyrophosphoryl-MurNAc-pentapeptide, known as lipid I. The protein is Phospho-N-acetylmuramoyl-pentapeptide-transferase of Actinobacillus succinogenes (strain ATCC 55618 / DSM 22257 / CCUG 43843 / 130Z).